The following is a 472-amino-acid chain: MNIKKIVKQATVLTFTTALLAGGATQAFAKENNQKAYKETYGVSHITRHDMLQIPKQQQNEKYQVPQFDQSTIKNIESAKGLDVWDSWPLQNADGTVAEYNGYHVVFALAGSPKDADDTSIYMFYQKVGDNSIDSWKNAGRVFKDSDKFDANDPILKDQTQEWSGSATFTSDGKIRLFYTDYSGKHYGKQSLTTAQVNVSKSDDTLKINGVEDHKTIFDGDGKTYQNVQQFIDEGNYTSGDNHTLRDPHYVEDKGHKYLVFEANTGTENGYQGEESLFNKAYYGGGTNFFRKESQKLQQSAKKRDAELANGALGIIELNNDYTLKKVMKPLITSNTVTDEIERANVFKMNGKWYLFTDSRGSKMTIDGINSNDIYMLGYVSNSLTGPYKPLNKTGLVLQMGLDPNDVTFTYSHFAVPQAKGNNVVITSYMTNRGFFEDKKATFGPSFLMNIKGNKTSVVKNSILEQGQLTVN.

The N-terminal stretch at 1 to 29 (MNIKKIVKQATVLTFTTALLAGGATQAFA) is a signal peptide. Residues tryptophan 85, aspartate 86, and serine 164 each contribute to the sucrose site. Aspartate 86 serves as the catalytic Nucleophile. Aspartate 241 serves as a coordination point for Ca(2+). Residues arginine 246 and aspartate 247 each contribute to the sucrose site. Ca(2+) contacts are provided by glutamine 272, leucine 308, asparagine 310, and aspartate 339. Residue glutamate 340 participates in sucrose binding. Catalysis depends on glutamate 342, which acts as the Proton donor/acceptor. Arginine 360 is a binding site for sucrose.

Belongs to the glycosyl hydrolase 68 family.

Its subcellular location is the secreted. It catalyses the reaction [6)-beta-D-fructofuranosyl-(2-&gt;](n) alpha-D-glucopyranoside + sucrose = [6)-beta-D-fructofuranosyl-(2-&gt;](n+1) alpha-D-glucopyranoside + D-glucose. Ca(2+) may play an important structural role and promote stability of levansucrase. Functionally, catalyzes the synthesis of levan, a fructose polymer, by transferring the fructosyl moiety from sucrose to a growing acceptor molecule. Also displays sucrose hydrolase activity. This Bacillus amyloliquefaciens (Bacillus velezensis) protein is Levansucrase.